Here is a 73-residue protein sequence, read N- to C-terminus: uncharacterized protein (73 aa).

Residues 1–21 (MTLFSSLSSLSTGSLKSSVSS) form the signal peptide. The segment covering 1 to 38 (MTLFSSLSSLSTGSLKSSVSSIETGSSSGSFGSNETSG) has biased composition (low complexity). The interval 1–43 (MTLFSSLSSLSTGSLKSSVSSIETGSSSGSFGSNETSGWGSHH) is disordered. N-linked (GlcNAc...) asparagine glycosylation is present at N34.

It is found in the secreted. This is an uncharacterized protein from Dictyostelium discoideum (Social amoeba).